Here is a 602-residue protein sequence, read N- to C-terminus: Elongation factor 4 (602 aa).

The 182-residue stretch at 7 to 188 (ENIRNFSIIA…AIVELIPPPK (182 aa)) folds into the tr-type G domain. Residues 19–24 (DHGKST) and 135–138 (NKID) each bind GTP.

This sequence belongs to the TRAFAC class translation factor GTPase superfamily. Classic translation factor GTPase family. LepA subfamily.

Its subcellular location is the cell inner membrane. The enzyme catalyses GTP + H2O = GDP + phosphate + H(+). Functionally, required for accurate and efficient protein synthesis under certain stress conditions. May act as a fidelity factor of the translation reaction, by catalyzing a one-codon backward translocation of tRNAs on improperly translocated ribosomes. Back-translocation proceeds from a post-translocation (POST) complex to a pre-translocation (PRE) complex, thus giving elongation factor G a second chance to translocate the tRNAs correctly. Binds to ribosomes in a GTP-dependent manner. The protein is Elongation factor 4 of Chlamydia abortus (strain DSM 27085 / S26/3) (Chlamydophila abortus).